Reading from the N-terminus, the 121-residue chain is Regulator of ribonuclease activity B (121 aa).

The protein belongs to the RraB family. As to quaternary structure, interacts with the C-terminal region of Rne.

Its subcellular location is the cytoplasm. Its function is as follows. Globally modulates RNA abundance by binding to RNase E (Rne) and regulating its endonucleolytic activity. Can modulate Rne action in a substrate-dependent manner by altering the composition of the degradosome. This Psychromonas ingrahamii (strain DSM 17664 / CCUG 51855 / 37) protein is Regulator of ribonuclease activity B.